A 426-amino-acid chain; its full sequence is Serine hydroxymethyltransferase (426 aa).

Residues Leu118 and 122-124 (GHL) contribute to the (6S)-5,6,7,8-tetrahydrofolate site. At Lys227 the chain carries N6-(pyridoxal phosphate)lysine.

Belongs to the SHMT family. Homodimer. Requires pyridoxal 5'-phosphate as cofactor.

It localises to the cytoplasm. The enzyme catalyses (6R)-5,10-methylene-5,6,7,8-tetrahydrofolate + glycine + H2O = (6S)-5,6,7,8-tetrahydrofolate + L-serine. It participates in one-carbon metabolism; tetrahydrofolate interconversion. The protein operates within amino-acid biosynthesis; glycine biosynthesis; glycine from L-serine: step 1/1. Its function is as follows. Catalyzes the reversible interconversion of serine and glycine with tetrahydrofolate (THF) serving as the one-carbon carrier. This reaction serves as the major source of one-carbon groups required for the biosynthesis of purines, thymidylate, methionine, and other important biomolecules. Also exhibits THF-independent aldolase activity toward beta-hydroxyamino acids, producing glycine and aldehydes, via a retro-aldol mechanism. This Mycolicibacterium paratuberculosis (strain ATCC BAA-968 / K-10) (Mycobacterium paratuberculosis) protein is Serine hydroxymethyltransferase.